The sequence spans 970 residues: MLDFLKRFFGSSQERTLKKFQKLVDKVNLYDEMLAPLSDEELRNKTVELKKRYQEGESLDDMLPEAYAVVKNVCRRLTGTPVEVSGYHQNWDMVPYDVQILGAIAMHKGFITEMQTGEGKTLTAVMPLYLNALTGKPVHLVTVNDYLAQRDCEWVGSILRWLGLTTGVLIAGSPLEKRKEIYRCDVVYGTASEFGFDYLRDNSIATSVDEQVGRGFYFAIIDEVDSILIDEARTPLIISGPGEKHNPVYFELKDKVAGLVQLQRELCNQLALEARRGLELYLDMDILPKDKKVVEGISEFCRSLWLVSKGMPLNRVLRRVREHPDLRAMIDKWDIYYHAEQNKEESIEQLSQLYIIVDEHNNDFELTDRGMQQWVDKAGGSAEDFVMMDMGHEYSLIDSDESLSPTDKINRKIAVSEEDTQRKARAHGLRQLLRAQLLMERDVDYIVRDDQIIIIDEHTGRPQPGRRFSEGLHQAIEAKEHVTIRKESQTFATVTLQNFFRLYEKLAGMTGTAITESKEFKEIYNLYVLQVPTFKTCLRIDHNDEFYMTEREKYHAIVNEIARVHKEGNPILIGTESVEVSEKLSRILKQNRIDHTVLNAKNHAQEAEIIAAAGKLGAVTVATNMAGRGTDIKLDEEAVVVGGLHVIGTSRHQSRRIDRQLRGRCARLGDPGAAKFFLSFEDRLMRLFASPKLNALIRHFRPPEGEAMSDPMFNKLIETAQKRVEARNYTIRKHTLEYDDVMNKQRQTIYAFRNEIIRSEDVFPLAKEAIYHVSLMIASLITSRNHPTGHSLPNLEEWMNYSFPIKLNLDELRKLTTLDAIAEQVAEDLIEVFQNKFSSMVEEITTAAGDDVDAKGICRDIIRSVMIMHIDEQWKIHLVDMDLLRSEVGLRTVGQKDPLIEFKHESFLLFESLVRDIRIAIVKHLFRLELTMTREQRPQNVIPVVATSFQNDENFGPMELTVISDADDDE.

ATP is bound by residues glutamine 99, 117 to 121 (GEGKT), and aspartate 631.

It belongs to the SecA family. In terms of assembly, monomer and homodimer. Part of the essential Sec protein translocation apparatus which comprises SecA, SecYEG and auxiliary proteins SecDF. Other proteins may also be involved.

It localises to the cell inner membrane. The protein resides in the cytoplasm. It carries out the reaction ATP + H2O + cellular proteinSide 1 = ADP + phosphate + cellular proteinSide 2.. In terms of biological role, part of the Sec protein translocase complex. Interacts with the SecYEG preprotein conducting channel. Has a central role in coupling the hydrolysis of ATP to the transfer of proteins into and across the cell membrane, serving as an ATP-driven molecular motor driving the stepwise translocation of polypeptide chains across the membrane. The chain is Protein translocase subunit SecA from Chlamydia caviae (strain ATCC VR-813 / DSM 19441 / 03DC25 / GPIC) (Chlamydophila caviae).